We begin with the raw amino-acid sequence, 380 residues long: MGSSCRIECIFFSEFHPTLGPKITYQVPEDFISRELFDTVQVYIITKPELQNKLITVTAMEKKLIGCPVCIEHKKYSRNALLFNLGFVCDAQAKTCALEPIVKKLAGYLTTLELESSFVSTEESKQKLVPIMTILLEELNASGRCTLPIDESNTIHLKVIEQRPDPPVAQEYDVPVFTKDKEDFFNSQWDLTTQQILPYIDGFRHVQKISAEADVELNLVRIAIQNLLYYGVVTLVSILQYSNVYCPTPKVQDLVDDKSLQEACLSYVTKEGHKRASLRDVFQLYCSLSPGTTVRDLIGRHPQQLQHVDERKLIQFGLMKNLIRRLQKYPVRVSRDERSHPARLYTGCHSYDEICCKTGMSYQELDERLENDPNIIICWK.

An interaction with PDPK1 region spans residues 1 to 133 (MGSSCRIECI…SKQKLVPIMT (133 aa)). Arg-78 provides a ligand contact to GDP. Arg-78 is modified (asymmetric dimethylarginine). Residues Lys-158 and Lys-357 each participate in a glycyl lysine isopeptide (Lys-Gly) (interchain with G-Cter in ubiquitin) cross-link.

The protein belongs to the NPR2 family. Within the GATOR complex, component of the GATOR1 subcomplex, made of DEPDC5, NPRL2 and NPRL3. GATOR1 mediates the strong interaction of the GATOR complex with small GTPases Rag (RagA/RRAGA, RagB/RRAGB, RagC/RRAGC and/or RagD/RRAGD) heterodimers. GATOR1 interacts with GPR155/LYCHOS; interaction takes place in presence of cholesterol and prevents interaction between GATOR1 and KICSTOR. Interacts with PDPK1. In the presence of abundant amino acids, ubiquitinated at Lys-158 and Lys-357 via 'Lys-6'-linked ubiquitination by the WDR24 component of the GATOR2 complex, thereby inhibiting the GATOR1 complex and promoting mTORC1 activation. In terms of processing, asymmetric dimethylation at Arg-78 by PRMT1 inhibits the GTPase activator activity of the GATOR1 complex and consequently inducing timely mTORC1 activation under methionine-sufficient conditions.

The protein localises to the lysosome membrane. In terms of biological role, catalytic component of the GATOR1 complex, a multiprotein complex that functions as an inhibitor of the amino acid-sensing branch of the mTORC1 pathway. In response to amino acid depletion, the GATOR1 complex has GTPase activating protein (GAP) activity and strongly increases GTP hydrolysis by RagA/RRAGA (or RagB/RRAGB) within heterodimeric Rag complexes, thereby turning them into their inactive GDP-bound form, releasing mTORC1 from lysosomal surface and inhibiting mTORC1 signaling. In the presence of abundant amino acids, the GATOR1 complex is ubiquitinated and inhibited by GATOR2. Within the GATOR1 complex, NPRL2 constitutes the catalytic subunit that mediates the GTPase activator activity and under methionine-sufficient conditions, the GTPase activator activity is inhibited by PRMT1 through methylation and consequently inducing timely mTORC1 activation. Functionally, suppresses Src-dependent tyrosine phosphorylation and activation of PDPK1 and its downstream signaling. Down-regulates PDPK1 kinase activity by interfering with tyrosine phosphorylation at 'Tyr-9', 'Tyr-373' and 'Tyr-376' residues. May act as a tumor suppressor. Suppresses cell growth and enhances sensitivity to various anticancer drugs. The chain is GATOR1 complex protein NPRL2 from Bos taurus (Bovine).